The chain runs to 592 residues: Pyruvate decarboxylase 3 (592 aa).

The substrate site is built by Asp54 and His141. The thiamine pyrophosphate binding stretch occupies residues 419–501 (DSWFNCQKLK…FLINNGGYTI (83 aa)). 3 residues coordinate Mg(2+): Asp469, Asn496, and Gly498. A substrate-binding site is contributed by Glu502.

It belongs to the TPP enzyme family. As to quaternary structure, homotetramer. A metal cation serves as cofactor. Requires thiamine diphosphate as cofactor. In terms of tissue distribution, expressed at low levels in roots and shoots.

It catalyses the reaction a 2-oxocarboxylate + H(+) = an aldehyde + CO2. The chain is Pyruvate decarboxylase 3 (PDC3) from Arabidopsis thaliana (Mouse-ear cress).